We begin with the raw amino-acid sequence, 311 residues long: Urease accessory protein UreD 2 (311 aa).

Belongs to the UreD family. UreD, UreF and UreG form a complex that acts as a GTP-hydrolysis-dependent molecular chaperone, activating the urease apoprotein by helping to assemble the nickel containing metallocenter of UreC. The UreE protein probably delivers the nickel.

It localises to the cytoplasm. Functionally, required for maturation of urease via the functional incorporation of the urease nickel metallocenter. The sequence is that of Urease accessory protein UreD 2 from Methylorubrum extorquens (strain PA1) (Methylobacterium extorquens).